Reading from the N-terminus, the 358-residue chain is Carbamoyl phosphate synthase small chain (358 aa).

The CPSase stretch occupies residues 1–168 (MKRLLLLEDG…TKLAYASPGV (168 aa)). Positions 45, 219, and 221 each coordinate L-glutamine. Positions 171 to 357 (NIVLVDFGLK…INMIDDFQQK (187 aa)) constitute a Glutamine amidotransferase type-1 domain. The Nucleophile role is filled by cysteine 246. Methionine 247, glutamine 250, asparagine 288, glycine 290, and tyrosine 291 together coordinate L-glutamine. Residues histidine 330 and aspartate 332 contribute to the active site.

Belongs to the CarA family. In terms of assembly, composed of two chains; the small (or glutamine) chain promotes the hydrolysis of glutamine to ammonia, which is used by the large (or ammonia) chain to synthesize carbamoyl phosphate. Tetramer of heterodimers (alpha,beta)4.

It carries out the reaction hydrogencarbonate + L-glutamine + 2 ATP + H2O = carbamoyl phosphate + L-glutamate + 2 ADP + phosphate + 2 H(+). The catalysed reaction is L-glutamine + H2O = L-glutamate + NH4(+). It functions in the pathway amino-acid biosynthesis; L-arginine biosynthesis; carbamoyl phosphate from bicarbonate: step 1/1. Its pathway is pyrimidine metabolism; UMP biosynthesis via de novo pathway; (S)-dihydroorotate from bicarbonate: step 1/3. In terms of biological role, small subunit of the glutamine-dependent carbamoyl phosphate synthetase (CPSase). CPSase catalyzes the formation of carbamoyl phosphate from the ammonia moiety of glutamine, carbonate, and phosphate donated by ATP, constituting the first step of 2 biosynthetic pathways, one leading to arginine and/or urea and the other to pyrimidine nucleotides. The small subunit (glutamine amidotransferase) binds and cleaves glutamine to supply the large subunit with the substrate ammonia. The chain is Carbamoyl phosphate synthase small chain from Streptococcus agalactiae serotype III (strain NEM316).